Reading from the N-terminus, the 255-residue chain is Thiazole synthase (255 aa).

The active-site Schiff-base intermediate with DXP is lysine 97. 1-deoxy-D-xylulose 5-phosphate is bound by residues glycine 158, 184 to 185 (AG), and 206 to 207 (NT).

It belongs to the ThiG family. In terms of assembly, homotetramer. Forms heterodimers with either ThiH or ThiS.

It is found in the cytoplasm. The enzyme catalyses [ThiS sulfur-carrier protein]-C-terminal-Gly-aminoethanethioate + 2-iminoacetate + 1-deoxy-D-xylulose 5-phosphate = [ThiS sulfur-carrier protein]-C-terminal Gly-Gly + 2-[(2R,5Z)-2-carboxy-4-methylthiazol-5(2H)-ylidene]ethyl phosphate + 2 H2O + H(+). Its pathway is cofactor biosynthesis; thiamine diphosphate biosynthesis. Functionally, catalyzes the rearrangement of 1-deoxy-D-xylulose 5-phosphate (DXP) to produce the thiazole phosphate moiety of thiamine. Sulfur is provided by the thiocarboxylate moiety of the carrier protein ThiS. In vitro, sulfur can be provided by H(2)S. In Acetivibrio thermocellus (strain ATCC 27405 / DSM 1237 / JCM 9322 / NBRC 103400 / NCIMB 10682 / NRRL B-4536 / VPI 7372) (Clostridium thermocellum), this protein is Thiazole synthase.